A 592-amino-acid chain; its full sequence is Aspartate--tRNA ligase (592 aa).

Residue Glu171 coordinates L-aspartate. The segment at 195 to 198 (QLFK) is aspartate. An L-aspartate-binding site is contributed by Arg217. ATP-binding positions include 217–219 (RDE) and Gln226. His448 contacts L-aspartate. Glu482 provides a ligand contact to ATP. An L-aspartate-binding site is contributed by Arg489. 534-537 (GLDR) is a binding site for ATP.

The protein belongs to the class-II aminoacyl-tRNA synthetase family. Type 1 subfamily. Homodimer.

It is found in the cytoplasm. It catalyses the reaction tRNA(Asp) + L-aspartate + ATP = L-aspartyl-tRNA(Asp) + AMP + diphosphate. In terms of biological role, catalyzes the attachment of L-aspartate to tRNA(Asp) in a two-step reaction: L-aspartate is first activated by ATP to form Asp-AMP and then transferred to the acceptor end of tRNA(Asp). This chain is Aspartate--tRNA ligase, found in Pseudoalteromonas translucida (strain TAC 125).